The primary structure comprises 249 residues: MQILLEDPTKAAQAQVLASQLNQTDYPQFALVFTPERLELRKLDEPKLGAVYVDFVEGAVAHRRKFGGGRGQSIAKAVGLKAGAMPTVVDATAGLGRDAFVLASLGCKVTLIERSPVVAALLQDGLMRAAQDPEIGPWVSERMRLLQGPAVDNLLALPERPDVIYLDPMFPHKQKSALVKKEMRVFQSLVGPDLDADALLPAALQMADKRVVVKRPDYAGWLNEHKPSMAIETKSNRFDVYVMAALAAG.

S-adenosyl-L-methionine is bound by residues 97–98, 113–114, and Asp167; these read RD and ER.

Belongs to the methyltransferase superfamily. RsmJ family.

It localises to the cytoplasm. It catalyses the reaction guanosine(1516) in 16S rRNA + S-adenosyl-L-methionine = N(2)-methylguanosine(1516) in 16S rRNA + S-adenosyl-L-homocysteine + H(+). Its function is as follows. Specifically methylates the guanosine in position 1516 of 16S rRNA. The chain is Ribosomal RNA small subunit methyltransferase J from Aeromonas salmonicida (strain A449).